Reading from the N-terminus, the 808-residue chain is Phenylalanine--tRNA ligase beta subunit (808 aa).

The region spanning 40-155 (NQGATGVVVG…DDVEIGSDAL (116 aa)) is the tRNA-binding domain. The region spanning 409–484 (IEEPVVSLNL…RLYGYDNIPT (76 aa)) is the B5 domain. Mg(2+) is bound by residues D462, D468, E471, and E472. The FDX-ACB domain maps to 714–807 (PRFPAISRDI…LEASTGAVLR (94 aa)).

It belongs to the phenylalanyl-tRNA synthetase beta subunit family. Type 1 subfamily. In terms of assembly, tetramer of two alpha and two beta subunits. Mg(2+) is required as a cofactor.

It localises to the cytoplasm. It catalyses the reaction tRNA(Phe) + L-phenylalanine + ATP = L-phenylalanyl-tRNA(Phe) + AMP + diphosphate + H(+). The polypeptide is Phenylalanine--tRNA ligase beta subunit (pheT) (Halalkalibacterium halodurans (strain ATCC BAA-125 / DSM 18197 / FERM 7344 / JCM 9153 / C-125) (Bacillus halodurans)).